The following is an 877-amino-acid chain: Mediator of RNA polymerase II transcription subunit 16 (877 aa).

9 WD repeats span residues 21–71 (WEKW…EHPW), 72–119 (DLHS…NSWE), 120–165 (SSVG…VKFS), 166–203 (PSLT…LTST), 204–257 (ESLC…RIDT), 258–334 (EILP…DKQP), 335–415 (TILK…RPVD), 416–460 (EPAM…LSPS), and 461–495 (MGHP…LLHV). The disordered stretch occupies residues 848 to 877 (PAFVQLGPQSTHHSPRTPRSLDHLHPEDRP). Residues 866–877 (RSLDHLHPEDRP) are compositionally biased toward basic and acidic residues.

It belongs to the Mediator complex subunit 16 family. In terms of assembly, component of the Mediator complex, which is composed of MED1, MED4, MED6, MED7, MED8, MED9, MED10, MED11, MED12, MED13, MED13L, MED14, MED15, MED16, MED17, MED18, MED19, MED20, MED21, MED22, MED23, MED24, MED25, MED26, MED27, MED29, MED30, MED31, CCNC, CDK8 and CDC2L6/CDK11. The MED12, MED13, CCNC and CDK8 subunits form a distinct module termed the CDK8 module. Mediator containing the CDK8 module is less active than Mediator lacking this module in supporting transcriptional activation. Individual preparations of the Mediator complex lacking one or more distinct subunits have been variously termed ARC, CRSP, DRIP, PC2, SMCC and TRAP.

It is found in the nucleus. Functionally, component of the Mediator complex, a coactivator involved in the regulated transcription of nearly all RNA polymerase II-dependent genes. Mediator functions as a bridge to convey information from gene-specific regulatory proteins to the basal RNA polymerase II transcription machinery. Mediator is recruited to promoters by direct interactions with regulatory proteins and serves as a scaffold for the assembly of a functional preinitiation complex with RNA polymerase II and the general transcription factors. In Homo sapiens (Human), this protein is Mediator of RNA polymerase II transcription subunit 16 (MED16).